The sequence spans 503 residues: Aromatase (503 aa).

3 consecutive transmembrane segments (helical) span residues 19–39 (EVAP…LLVW), 51–71 (GYFL…MGIG), and 303–323 (MLIA…FLIA). Positions 309 and 374 each coordinate substrate. Residue Cys-437 participates in heme binding.

It belongs to the cytochrome P450 family. Requires heme as cofactor.

Its subcellular location is the endoplasmic reticulum membrane. It is found in the microsome membrane. The catalysed reaction is testosterone + 3 reduced [NADPH--hemoprotein reductase] + 3 O2 = 17beta-estradiol + formate + 3 oxidized [NADPH--hemoprotein reductase] + 4 H2O + 4 H(+). It carries out the reaction androst-4-ene-3,17-dione + 3 reduced [NADPH--hemoprotein reductase] + 3 O2 = estrone + formate + 3 oxidized [NADPH--hemoprotein reductase] + 4 H2O + 4 H(+). The enzyme catalyses androst-4-ene-3,17-dione + reduced [NADPH--hemoprotein reductase] + O2 = 19-hydroxyandrost-4-ene-3,17-dione + oxidized [NADPH--hemoprotein reductase] + H2O + H(+). It catalyses the reaction 19-hydroxyandrost-4-ene-3,17-dione + reduced [NADPH--hemoprotein reductase] + O2 = 19-oxo-androst-4-ene-3,17-dione + oxidized [NADPH--hemoprotein reductase] + 2 H2O + H(+). The catalysed reaction is 19-oxo-androst-4-ene-3,17-dione + reduced [NADPH--hemoprotein reductase] + O2 = estrone + formate + oxidized [NADPH--hemoprotein reductase] + H2O + 2 H(+). It carries out the reaction estrone + reduced [NADPH--hemoprotein reductase] + O2 = 2-hydroxyestrone + oxidized [NADPH--hemoprotein reductase] + H2O + H(+). The enzyme catalyses 17beta-hydroxy-5alpha-androstan-3-one + reduced [NADPH--hemoprotein reductase] + O2 = 17beta,19-dihydroxy-3-oxo-5alpha-androstanone + oxidized [NADPH--hemoprotein reductase] + H2O + H(+). It catalyses the reaction 17beta,19-dihydroxy-3-oxo-5alpha-androstanone + reduced [NADPH--hemoprotein reductase] + O2 = 17beta-hydroxy-3,19-dioxo-5alpha-androstanone + oxidized [NADPH--hemoprotein reductase] + 2 H2O + H(+). The catalysed reaction is 17beta-hydroxy-3,19-dioxo-5alpha-androstanone + reduced [NADPH--hemoprotein reductase] + O2 = 17beta-hydroxy-3-oxo-19-nor-5alpha-androst-1-ene + formate + oxidized [NADPH--hemoprotein reductase] + H2O + 2 H(+). It functions in the pathway steroid hormone biosynthesis. A cytochrome P450 monooxygenase that catalyzes the conversion of C19 androgens, androst-4-ene-3,17-dione (androstenedione) and testosterone to the C18 estrogens, estrone and estradiol, respectively. Catalyzes three successive oxidations of C19 androgens: two conventional oxidations at C19 yielding 19-hydroxy and 19-oxo/19-aldehyde derivatives, followed by a third oxidative aromatization step that involves C1-beta hydrogen abstraction combined with cleavage of the C10-C19 bond to yield a phenolic A ring and formic acid. Alternatively, the third oxidative reaction yields a 19-norsteroid and formic acid. Converts dihydrotestosterone to delta1,10-dehydro 19-nordihydrotestosterone and may play a role in homeostasis of this potent androgen. Also displays 2-hydroxylase activity toward estrone. Mechanistically, uses molecular oxygen inserting one oxygen atom into a substrate, and reducing the second into a water molecule, with two electrons provided by NADPH via cytochrome P450 reductase (CPR; NADPH-ferrihemoprotein reductase). The sequence is that of Aromatase (CYP19A1) from Leucopleurus acutus (Atlantic white-sided dolphin).